Consider the following 150-residue polypeptide: UPF0336 protein SAV_4901 (150 aa).

One can recognise a MaoC-like domain in the interval 8–126; the sequence is VGRSYPPTDP…GNDVVDVRGE (119 aa).

This sequence belongs to the UPF0336 family.

The polypeptide is UPF0336 protein SAV_4901 (Streptomyces avermitilis (strain ATCC 31267 / DSM 46492 / JCM 5070 / NBRC 14893 / NCIMB 12804 / NRRL 8165 / MA-4680)).